A 181-amino-acid chain; its full sequence is Inner membrane-spanning protein YciB (181 aa).

Transmembrane regions (helical) follow at residues 10-30 (LIIF…GALI), 50-70 (MHLI…VFHD), 72-92 (AFIK…LGVS), 118-138 (VTWY…YVAF), and 148-168 (FKVF…VFYL).

Belongs to the YciB family.

The protein resides in the cell inner membrane. Functionally, plays a role in cell envelope biogenesis, maintenance of cell envelope integrity and membrane homeostasis. This is Inner membrane-spanning protein YciB from Shewanella sp. (strain MR-4).